Reading from the N-terminus, the 885-residue chain is Cadherin-1 (885 aa).

Residues Met-1–Cys-26 form the signal peptide. The propeptide occupies Gln-27–Arg-156. The span at Lys-121–His-131 shows a compositional bias: basic residues. The segment at Lys-121–Val-141 is disordered. The Extracellular portion of the chain corresponds to Asp-157 to Ala-712. 5 Cadherin domains span residues Trp-158–Phe-264, Thr-265–Phe-377, Asn-378–Phe-488, Ile-489–Pro-597, and Lys-607–Cys-688. Ca(2+) is bound at residue Asp-259. Ser-282 is a glycosylation site (O-linked (Man...) serine). The O-linked (Man...) threonine glycan is linked to Thr-287. Ca(2+) is bound at residue Asp-290. O-linked (Man...) threonine glycans are attached at residues Thr-360, Thr-472, Thr-474, and Thr-511. A glycan (N-linked (GlcNAc...) asparagine) is linked at Asn-560. Thr-578, Thr-580, and Thr-582 each carry an O-linked (Man...) threonine glycan. An N-linked (GlcNAc...) asparagine glycan is attached at Asn-639. The helical transmembrane segment at Ile-713 to Phe-733 threads the bilayer. The Cytoplasmic segment spans residues Val-734–Asp-885. The disordered stretch occupies residues Asp-750–Phe-770. Phosphotyrosine; by SRC occurs at positions 756, 757, and 758. Acidic residues predominate over residues Tyr-758 to Phe-770. The interval Glu-761–Leu-772 is required for binding CTNND1 and PSEN1. Phosphoserine is present on residues Ser-773, Ser-796, Ser-841, Ser-843, and Ser-849. Residues Pro-792–Gly-811 form a disordered region. The segment at Ile-814–Asp-885 is required for binding alpha, beta and gamma catenins.

In terms of assembly, homodimer; disulfide-linked. Component of an E-cadherin/ catenin adhesion complex composed of at least E-cadherin/CDH1, beta-catenin/CTNNB1 or gamma-catenin/JUP, and potentially alpha-catenin/CTNNA1; the complex is located to adherens junctions. Found in a complex composed of CDH1, RAP1A and PKP3; PKP3 acts as a scaffold protein within the complex, the complex is required for CDH1 localization to mature desmosome cell junctions. Interacts with the TRPV4 and CTNNB1 complex. Interacts with CTNND1. The stable association of CTNNA1 is controversial as CTNNA1 was shown not to bind to F-actin when assembled in the complex. Alternatively, the CTNNA1-containing complex may be linked to F-actin by other proteins such as LIMA1. Interaction with PSEN1, cleaves CDH1 resulting in the disassociation of cadherin-based adherens junctions (CAJs). Interacts with AJAP1 and DLGAP5. Interacts with TBC1D2. Interacts with LIMA1. Interacts with CAV1. Interacts with PIP5K1C. Interacts with RAB8B. Interacts with DDR1; this stabilizes CDH1 at the cell surface and inhibits its internalization. Interacts with RAPGEF2. Interacts with KLRG1. Forms a ternary complex composed of ADAM10, CADH1 and EPHA4; within the complex, CADH1 is cleaved by ADAM10 which disrupts adherens junctions. Interacts with SPEF1. Interacts with CTNNB1 and PKP2. Interacts with AMOTL2; the interaction may facilitate binding of radial actin fibers to cell junction complexes. Interacts with DSG3; the interaction is required for CDH1 localization to developing adherens junctions. During apoptosis or with calcium influx, cleaved by a membrane-bound metalloproteinase (ADAM10), PS1/gamma-secretase and caspase-3. Processing by the metalloproteinase, induced by calcium influx, causes disruption of cell-cell adhesion and the subsequent release of beta-catenin into the cytoplasm. The residual membrane-tethered cleavage product is rapidly degraded via an intracellular proteolytic pathway. Cleavage by caspase-3 releases the cytoplasmic tail resulting in disintegration of the actin microfilament system. The gamma-secretase-mediated cleavage promotes disassembly of adherens junctions. During development of the cochlear organ of Corti, cleavage by ADAM10 at adherens junctions promotes pillar cell separation. Post-translationally, N-glycosylation at Asn-639 is essential for expression, folding and trafficking. Addition of bisecting N-acetylglucosamine by MGAT3 modulates its cell membrane location. In terms of processing, ubiquitinated by a SCF complex containing SKP2, which requires prior phosphorylation by CK1/CSNK1A1. Ubiquitinated by CBLL1/HAKAI, requires prior phosphorylation at Tyr-757. O-glycosylated. O-manosylated by TMTC1, TMTC2, TMTC3 or TMTC4. Thr-287 and Thr-511 are O-mannosylated by TMTC2 or TMTC4 but not TMTC1 or TMTC3.

The protein resides in the cell junction. The protein localises to the adherens junction. It localises to the cell membrane. Its subcellular location is the endosome. It is found in the golgi apparatus. The protein resides in the trans-Golgi network. The protein localises to the cytoplasm. It localises to the desmosome. In terms of biological role, cadherins are calcium-dependent cell adhesion proteins. They preferentially interact with themselves in a homophilic manner in connecting cells; cadherins may thus contribute to the sorting of heterogeneous cell types. CDH1 is involved in mechanisms regulating cell-cell adhesions, mobility and proliferation of epithelial cells. Promotes organization of radial actin fiber structure and cellular response to contractile forces, via its interaction with AMOTL2 which facilitates anchoring of radial actin fibers to CDH1 junction complexes at the cell membrane. Plays a role in the early stages of desmosome cell-cell junction formation via facilitating the recruitment of DSG2 and DSP to desmosome plaques. Has a potent invasive suppressor role. It is a ligand for integrin alpha-E/beta-7. Its function is as follows. E-Cad/CTF2 promotes non-amyloidogenic degradation of Abeta precursors. Has a strong inhibitory effect on APP C99 and C83 production. This is Cadherin-1 (CDH1) from Canis lupus familiaris (Dog).